Here is a 495-residue protein sequence, read N- to C-terminus: Phosphomethylpyrimidine synthase (495 aa).

Residues N125, M154, Y183, H219, 239 to 241 (SRG), 280 to 283 (DGLR), and E319 contribute to the substrate site. H323 is a binding site for Zn(2+). Y346 is a binding site for substrate. Zn(2+) is bound at residue H387. Residues C467, C470, and C475 each coordinate [4Fe-4S] cluster.

Belongs to the ThiC family. It depends on [4Fe-4S] cluster as a cofactor.

It carries out the reaction 5-amino-1-(5-phospho-beta-D-ribosyl)imidazole + S-adenosyl-L-methionine = 4-amino-2-methyl-5-(phosphooxymethyl)pyrimidine + CO + 5'-deoxyadenosine + formate + L-methionine + 3 H(+). It functions in the pathway cofactor biosynthesis; thiamine diphosphate biosynthesis. In terms of biological role, catalyzes the synthesis of the hydroxymethylpyrimidine phosphate (HMP-P) moiety of thiamine from aminoimidazole ribotide (AIR) in a radical S-adenosyl-L-methionine (SAM)-dependent reaction. The sequence is that of Phosphomethylpyrimidine synthase from Leptospira interrogans serogroup Icterohaemorrhagiae serovar copenhageni (strain Fiocruz L1-130).